We begin with the raw amino-acid sequence, 220 residues long: Ribose-5-phosphate isomerase A (220 aa).

Substrate is bound by residues 25–28 (TGST), 80–83 (DGAD), and 93–96 (KGGG). Glutamate 102 acts as the Proton acceptor in catalysis. Lysine 120 lines the substrate pocket.

The protein belongs to the ribose 5-phosphate isomerase family. Homodimer.

The enzyme catalyses aldehydo-D-ribose 5-phosphate = D-ribulose 5-phosphate. It functions in the pathway carbohydrate degradation; pentose phosphate pathway; D-ribose 5-phosphate from D-ribulose 5-phosphate (non-oxidative stage): step 1/1. Functionally, catalyzes the reversible conversion of ribose-5-phosphate to ribulose 5-phosphate. In Bacillus cereus (strain ATCC 10987 / NRS 248), this protein is Ribose-5-phosphate isomerase A.